The following is a 971-amino-acid chain: Outer capsid protein VP2 (971 aa).

This sequence belongs to the orbivirus VP2 family.

It is found in the virion. In terms of biological role, the VP2 protein is one of the two proteins (with VP5) which constitute the virus particle outer capsid. It is the major target of the host immunogenic response. The polypeptide is Outer capsid protein VP2 (Segment-2) (Epizootic hemorrhagic disease virus 1 (EHDV-1)).